We begin with the raw amino-acid sequence, 39 residues long: Photosystem I reaction center subunit IX (39 aa).

A helical transmembrane segment spans residues 7 to 27 (FLTTAPVAFILFSSFVFALFI).

Belongs to the PsaJ family.

Its subcellular location is the cellular thylakoid membrane. May help in the organization of the PsaE and PsaF subunits. The polypeptide is Photosystem I reaction center subunit IX (Synechococcus sp. (strain JA-2-3B'a(2-13)) (Cyanobacteria bacterium Yellowstone B-Prime)).